The primary structure comprises 284 residues: Pantothenate synthetase (284 aa).

31–38 (MGNLHAGH) contacts ATP. Histidine 38 serves as the catalytic Proton donor. Glutamine 62 contacts (R)-pantoate. Glutamine 62 provides a ligand contact to beta-alanine. Position 150–153 (150–153 (GKKD)) interacts with ATP. Glutamine 156 is a binding site for (R)-pantoate. ATP is bound by residues valine 179 and 187-190 (MSSR).

This sequence belongs to the pantothenate synthetase family. As to quaternary structure, homodimer.

It is found in the cytoplasm. The enzyme catalyses (R)-pantoate + beta-alanine + ATP = (R)-pantothenate + AMP + diphosphate + H(+). It functions in the pathway cofactor biosynthesis; (R)-pantothenate biosynthesis; (R)-pantothenate from (R)-pantoate and beta-alanine: step 1/1. In terms of biological role, catalyzes the condensation of pantoate with beta-alanine in an ATP-dependent reaction via a pantoyl-adenylate intermediate. The polypeptide is Pantothenate synthetase (Xanthomonas campestris pv. campestris (strain 8004)).